The following is a 322-amino-acid chain: Replication factor C small subunit 2 (322 aa).

Position 44 to 51 (44 to 51 (GPPGTGKT)) interacts with ATP.

The protein belongs to the activator 1 small subunits family. RfcS subfamily. Heteromultimer composed of small subunits (RfcS) and large subunits (RfcL).

Part of the RFC clamp loader complex which loads the PCNA sliding clamp onto DNA. This chain is Replication factor C small subunit 2, found in Pyrobaculum arsenaticum (strain DSM 13514 / JCM 11321 / PZ6).